The primary structure comprises 251 residues: Tryptophan synthase alpha chain (251 aa).

Catalysis depends on proton acceptor residues glutamate 36 and aspartate 47.

This sequence belongs to the TrpA family. Tetramer of two alpha and two beta chains.

It carries out the reaction (1S,2R)-1-C-(indol-3-yl)glycerol 3-phosphate + L-serine = D-glyceraldehyde 3-phosphate + L-tryptophan + H2O. Its pathway is amino-acid biosynthesis; L-tryptophan biosynthesis; L-tryptophan from chorismate: step 5/5. Its function is as follows. The alpha subunit is responsible for the aldol cleavage of indoleglycerol phosphate to indole and glyceraldehyde 3-phosphate. The chain is Tryptophan synthase alpha chain from Thermococcus kodakarensis (strain ATCC BAA-918 / JCM 12380 / KOD1) (Pyrococcus kodakaraensis (strain KOD1)).